A 72-amino-acid polypeptide reads, in one-letter code: Sperm protein associated with the nucleus on the X chromosome N1 (72 aa).

The segment at 1 to 40 (MEKPTSSTNGEKRKSPCDSNNKNDEMQETPNRDLVLEPSL) is disordered. Basic and acidic residues predominate over residues 10-35 (GEKRKSPCDSNNKNDEMQETPNRDLV).

It belongs to the SPAN-X family.

The chain is Sperm protein associated with the nucleus on the X chromosome N1 (SPANXN1) from Gorilla gorilla gorilla (Western lowland gorilla).